Reading from the N-terminus, the 284-residue chain is MTNKVVKIGDIPVANDLPFVLFGGMNVLESRDLAMRICEHYVTVTQKLGIPYVFKASFDKANRSSIHSYRGPGLEEGMKIFQELKQTFGVKIITDVHDSHQAQPVADVVDVIQLPAFLARQTDLVEAMAKTGAVINVKKPQFVSPGQMGNIVDKFIEGGNDQIILCDRGSNFGYDNLVVDMLGFNVMKHASNGSPVIFDVTHALQCRDPFGAASGGRRGQVTELARAGMAVGLAGLFIEAHPDPANAKCDGPSALPLDKLEPFLQQIKAIDDLVKSFPELDTSN.

This sequence belongs to the KdsA family.

It localises to the cytoplasm. It catalyses the reaction D-arabinose 5-phosphate + phosphoenolpyruvate + H2O = 3-deoxy-alpha-D-manno-2-octulosonate-8-phosphate + phosphate. It functions in the pathway carbohydrate biosynthesis; 3-deoxy-D-manno-octulosonate biosynthesis; 3-deoxy-D-manno-octulosonate from D-ribulose 5-phosphate: step 2/3. The protein operates within bacterial outer membrane biogenesis; lipopolysaccharide biosynthesis. The protein is 2-dehydro-3-deoxyphosphooctonate aldolase of Pectobacterium atrosepticum (strain SCRI 1043 / ATCC BAA-672) (Erwinia carotovora subsp. atroseptica).